Here is a 231-residue protein sequence, read N- to C-terminus: MDALTDRQLEVLRFIARQIEDNGYPPTIREIGEALDIRSTNGVNDHLKALERKGFLTRDPVKSRALIPTPQAREVLGGGARASNVVPFTRTPAVGLKPAGRLVEIPILGRVAAGQPILAQERVEDTVQVDSFLLGTNKKVYGLRVQGDSMIGDGILPGDYIFVKKQLHAEDGDIVVAMIDEEATVKRVYFEGDRVRFQPSNPRMAPIYVRGSDFRTTMILGVVVGVYRKLG.

A DNA-binding region (H-T-H motif) is located at residues 28-48 (IREIGEALDIRSTNGVNDHLK). Residues Ser-149 and Lys-186 each act as for autocatalytic cleavage activity in the active site.

The protein belongs to the peptidase S24 family. As to quaternary structure, homodimer.

It carries out the reaction Hydrolysis of Ala-|-Gly bond in repressor LexA.. Its function is as follows. Represses a number of genes involved in the response to DNA damage (SOS response), including recA and lexA. In the presence of single-stranded DNA, RecA interacts with LexA causing an autocatalytic cleavage which disrupts the DNA-binding part of LexA, leading to derepression of the SOS regulon and eventually DNA repair. In Anaeromyxobacter sp. (strain Fw109-5), this protein is LexA repressor.